A 280-amino-acid polypeptide reads, in one-letter code: uncharacterized protein (280 aa).

3 helical membrane-spanning segments follow: residues 15–35 (IVDILLVAVILWIGVFIINRL), 68–88 (IGFIFYVISLFVHDFGKILAG), and 94–114 (IVIGFGAQSLIKDVLAGVFLI).

It belongs to the MscS (TC 1.A.23) family.

It localises to the cell membrane. Its function is as follows. May play a role in resistance to osmotic downshock. This is an uncharacterized protein from Bacillus subtilis (strain 168).